The sequence spans 362 residues: Chorismate synthase (362 aa).

Arginine 46 serves as a coordination point for NADP(+). FMN contacts are provided by residues 122 to 124 (RSS), 238 to 239 (NA), glycine 278, 293 to 297 (KPTPS), and arginine 319.

It belongs to the chorismate synthase family. Homotetramer. FMNH2 is required as a cofactor.

It carries out the reaction 5-O-(1-carboxyvinyl)-3-phosphoshikimate = chorismate + phosphate. The protein operates within metabolic intermediate biosynthesis; chorismate biosynthesis; chorismate from D-erythrose 4-phosphate and phosphoenolpyruvate: step 7/7. Its function is as follows. Catalyzes the anti-1,4-elimination of the C-3 phosphate and the C-6 proR hydrogen from 5-enolpyruvylshikimate-3-phosphate (EPSP) to yield chorismate, which is the branch point compound that serves as the starting substrate for the three terminal pathways of aromatic amino acid biosynthesis. This reaction introduces a second double bond into the aromatic ring system. The polypeptide is Chorismate synthase (Campylobacter jejuni subsp. jejuni serotype O:2 (strain ATCC 700819 / NCTC 11168)).